We begin with the raw amino-acid sequence, 800 residues long: DNA topoisomerase 4 subunit A (800 aa).

The Topo IIA-type catalytic domain maps to 31–496 (LPDVRDGLKP…ISEIKIDKEV (466 aa)). The active-site O-(5'-phospho-DNA)-tyrosine intermediate is Tyr119.

This sequence belongs to the type II topoisomerase GyrA/ParC subunit family. ParC type 2 subfamily. As to quaternary structure, heterotetramer composed of ParC and ParE.

It is found in the cell membrane. It carries out the reaction ATP-dependent breakage, passage and rejoining of double-stranded DNA.. Topoisomerase IV is essential for chromosome segregation. It relaxes supercoiled DNA. Performs the decatenation events required during the replication of a circular DNA molecule. This Staphylococcus epidermidis (strain ATCC 12228 / FDA PCI 1200) protein is DNA topoisomerase 4 subunit A.